Here is a 299-residue protein sequence, read N- to C-terminus: Transcription factor MYB17 (299 aa).

2 consecutive HTH myb-type domains span residues 9–61 and 62–116; these read KIGL…TNYL and RPDI…KKRL. 2 consecutive DNA-binding regions (H-T-H motif) follow at residues 37–61 and 89–112; these read WRTL…TNYL and WAAI…NTHL.

As to quaternary structure, interacts with LFY. As to expression, expressed in the shoot apex, young flower buds, developing carpels and siliques. Expressed in floral meristem, initiating floral primordia and developing flowers.

It localises to the nucleus. Its function is as follows. Transcription factor that may play a role in flower development by repressing ANT. Regulates the transition of meristem identity from vegetative growth to flowering. Acts downstream of LFY and upstream of AP1. Directly activates AP1 to promote floral fate. Together with LFY and AP1 may constitute a regulatory network that contributes to an abrupt and robust meristem identity transition. In Arabidopsis thaliana (Mouse-ear cress), this protein is Transcription factor MYB17.